The following is a 522-amino-acid chain: Sorting nexin-1 (522 aa).

The interval Met-1 to Gln-142 is disordered. Phosphoserine is present on residues Ser-32 and Ser-39. Residues Glu-35–Asp-45 show a composition bias toward acidic residues. Phosphothreonine occurs at positions 41 and 48. Phosphoserine occurs at positions 58 and 72. A compositionally biased stretch (acidic residues) spans Glu-132–Gln-142. The region spanning Phe-143–Arg-272 is the PX domain. Arg-186, Ser-188, and Lys-214 together coordinate a 1,2-diacyl-sn-glycero-3-phospho-(1D-myo-inositol-3-phosphate). Phosphoserine is present on Ser-188. The residue at position 237 (Lys-237) is an N6-acetyllysine. Arg-238 contributes to the a 1,2-diacyl-sn-glycero-3-phospho-(1D-myo-inositol-3-phosphate) binding site. Phosphoserine is present on Ser-280. Positions Gly-281 to Met-298 are membrane-binding amphipathic helix. One can recognise a BAR domain in the interval Met-302–Ser-522.

The protein belongs to the sorting nexin family. In terms of assembly, predominantly forms heterodimers with BAR domain-containing sorting nexins SNX5, SNX6 and SNX32; can self-associate to form homodimers. The heterodimers are proposed to self-assemble into helical arrays on the membrane to stabilize and expand local membrane curvature underlying endosomal tubule formation. Thought to be a component of the originally described retromer complex (also called SNX-BAR retromer) which is a pentamer containing the heterotrimeric retromer cargo-selective complex (CSC), also described as vacuolar protein sorting subcomplex (VPS) and a heterodimeric membrane-deforming subcomplex formed between SNX1 or SNX2 and SNX5 or SNX6 (also called SNX-BAR subcomplex); the respective CSC and SNX-BAR subcomplexes associate with low affinity. Interacts with SNX5, SNX6, SNX32, VPS26A, VPS29, VPS35, DRD5, DENND5A, KALRN, RHOG (GDP-bound form). The interaction with SNX2 is reported controversially. Interacts with DNAJC13; prevented by presence of HGS. Interacts with HGS.

The protein resides in the endosome membrane. The protein localises to the golgi apparatus. Its subcellular location is the trans-Golgi network membrane. It is found in the early endosome membrane. It localises to the cell projection. The protein resides in the lamellipodium. Its function is as follows. Involved in several stages of intracellular trafficking. Interacts with membranes containing phosphatidylinositol 3-phosphate (PtdIns(3P)) or phosphatidylinositol 3,5-bisphosphate (PtdIns(3,5)P2). Acts in part as component of the retromer membrane-deforming SNX-BAR subcomplex. The SNX-BAR retromer mediates retrograde transport of cargo proteins from endosomes to the trans-Golgi network (TGN) and is involved in endosome-to-plasma membrane transport for cargo protein recycling. The SNX-BAR subcomplex functions to deform the donor membrane into a tubular profile called endosome-to-TGN transport carrier (ETC). Can sense membrane curvature and has in vitro vesicle-to-membrane remodeling activity. Involved in retrograde endosome-to-TGN transport of lysosomal enzyme receptors (IGF2R, M6PR and SORT1). Plays a role in targeting ligand-activated EGFR to the lysosomes for degradation after endocytosis from the cell surface and release from the Golgi. Involvement in retromer-independent endocytic trafficking of P2RY1 and lysosomal degradation of protease-activated receptor-1/F2R. Promotes KALRN- and RHOG-dependent but retromer-independent membrane remodeling such as lamellipodium formation; the function is dependent on GEF activity of KALRN. Required for endocytosis of DRD5 upon agonist stimulation but not for basal receptor trafficking. This chain is Sorting nexin-1 (SNX1), found in Bos taurus (Bovine).